We begin with the raw amino-acid sequence, 77 residues long: PTS system N-acetylglucosamine-specific EIIB component (77 aa).

Positions 2-77 constitute a PTS EIIB type-1 domain; the sequence is ASKAEKIVAG…PIAAEIEDMM (76 aa). Residue cysteine 24 is the Phosphocysteine intermediate; for EIIB activity of the active site.

The catalysed reaction is N(pros)-phospho-L-histidyl-[protein] + N-acetyl-D-glucosamine(out) = N-acetyl-D-glucosamine 6-phosphate(in) + L-histidyl-[protein]. Its function is as follows. The phosphoenolpyruvate-dependent sugar phosphotransferase system (sugar PTS), a major carbohydrate active transport system, catalyzes the phosphorylation of incoming sugar substrates concomitantly with their translocation across the cell membrane. This system is involved in N-acetylglucosamine (GlcNAc) transport. The chain is PTS system N-acetylglucosamine-specific EIIB component from Streptomyces coelicolor (strain ATCC BAA-471 / A3(2) / M145).